A 957-amino-acid polypeptide reads, in one-letter code: MAAQKIRSANTNGLPRCKSEGALIDFSGVPDPNLSDVKVLSPSSLRVDNPASLDNVKEVVAIKDYCPNNFTTLKFSKGEHLYVLDTSGGEWWYAHNTTEMGYIPSSYVQPLNYRDSCLSDSGMIDGLLESVDEGVKELDLLGDWTETISQDPIKKCHNNPFLRPSVSNPFLNGPLMPQIHALETGNSVDLLLFDPLAPSHAFSSETSTDVLLDLLPNNTQNEVAVPVKRDNPFFRSKRSYSLSELSVLQAKSENPTTGSFFAGLKSPAPEQFQSREDFRTAWLNHRKLARSCHDLDLLGQNPGWGQTQPVETSIVCRLDSSGGAVQLPDTNISIHVPEKHVASGETQQISLKALLDPPLELNNDKCTTVSPVLEIKLSNMDVQSPLTLELRISVALGGNASALNMVGIKCLRSDAKEGPYNPVTQIYIYGDTVQVKLDNLEPVMYVVMVAQGQGIVSPSSVWEYINKKVTVGLYGPKHIHPSFKAVLAIFGHDCAPKTLLVNEVGQQANNSAPVTLQLWGKQQFVLPKPQDLQLCLFSNMTNYRVDAGDQGKMVRGFQLKLGKVSRLIFPIICQEPAQLSDFTLRVQVRDEVGGVLSQYCVQTPRPPPKTGNKSTGPRRFLKKKEVGKIVLSPLAVTCKYPTFQDRPVTSLKYGKLLKTVVRQSKNPYLLEYKKGDVIGLLSEEKIRLKGQLWNKEWYIGYYQGKLGLVHAKNVLVVGKVKPSFFSGPELTTGLLLEQMLRPCKFLTYIYASVRTLLMENIGSWRCFADALGYGNLPLSYFCRVELESETERVASVLEKLKEECNSEGKEKKSFQKELIMALLKIDCQGLVVRLIQDFVLLTTAVEVASRWRELAEKLARVSKQQMDGYEAPHRDRNGALDSEAMWKPAYDFLLTWSAQIGESYRDVIQELHTGLDKMRSPITKRWKHLTGTLILVNSLDILRAAAFSTQEPEDCII.

Residues 54 to 113 (DNVKEVVAIKDYCPNNFTTLKFSKGEHLYVLDTSGGEWWYAHNTTEMGYIPSSYVQPLNY) form the SH3 1 domain. Residues 312-449 (TSIVCRLDSS…LEPVMYVVMV (138 aa)) enclose the ZU5 domain. One can recognise an SH3 2 domain in the interval 649–719 (TSLKYGKLLK…HAKNVLVVGK (71 aa)).

As to quaternary structure, homodimer or homooligomer.

It localises to the membrane. The protein resides in the clathrin-coated pit. The protein localises to the cytoplasmic vesicle. It is found in the clathrin-coated vesicle. Its subcellular location is the nucleus. In terms of biological role, possible role in regulating endocytosis of the transferrin receptor at the plasma membrane. Alternatively, may function as a negative regulator of the amino acid-induced TOR signaling by inhibiting the formation of active Rag GTPase complexes. Preferentially binds inactive Rag GTPase complexes and prevents their interaction with the mTORC1 complex inhibiting its relocalization to lysosomes and its activation. Thereby, may indirectly regulate cell growth, proliferation and autophagy. The polypeptide is SH3 domain-binding protein 4 (sh3bp4) (Xenopus tropicalis (Western clawed frog)).